Here is a 615-residue protein sequence, read N- to C-terminus: Mitochondrial distribution and morphology protein 34 (615 aa).

The SMP-LTD domain maps to 1 to 195 (MAFNFNWSPL…LPAIIHRLSL (195 aa)). Disordered stretches follow at residues 293–313 (SDKPDATATPASTPNLHRTSS), 346–566 (ATTG…PQPD), and 596–615 (PAFWEDSHQHDIPPPAYEPR). Over residues 301–313 (TPASTPNLHRTSS) the composition is skewed to polar residues. Residues 346-355 (ATTGLSLGSG) are compositionally biased toward low complexity. The span at 356 to 367 (RHSKAGRKKKMR) shows a compositional bias: basic residues. Composition is skewed to polar residues over residues 384–403 (IGSTSSQAGDSHTEASTRTP), 435–446 (DATTSARASESS), and 457–499 (VTAQ…YSSR). The segment covering 517-557 (QQQQFQQQQQQQQQQQQQQQQQQQQQQQQQQQQQQQQQQQQ) has biased composition (low complexity). The segment covering 596 to 606 (PAFWEDSHQHD) has biased composition (basic and acidic residues).

It belongs to the MDM34 family. Component of the ER-mitochondria encounter structure (ERMES) or MDM complex, composed of mmm-1, mdm10, mdm12 and mdm34.

It localises to the mitochondrion outer membrane. Functionally, component of the ERMES/MDM complex, which serves as a molecular tether to connect the endoplasmic reticulum (ER) and mitochondria. Components of this complex are involved in the control of mitochondrial shape and protein biogenesis, and function in nonvesicular lipid trafficking between the ER and mitochondria. Mdm34 is required for the interaction of the ER-resident membrane protein mmm-1 and the outer mitochondrial membrane-resident beta-barrel protein mdm10. This is Mitochondrial distribution and morphology protein 34 from Neurospora crassa (strain ATCC 24698 / 74-OR23-1A / CBS 708.71 / DSM 1257 / FGSC 987).